We begin with the raw amino-acid sequence, 511 residues long: Glutamate/gamma-aminobutyrate antiporter (511 aa).

Residues 1-13 (MATSVQTGKAKQL) lie on the Cytoplasmic side of the membrane. Residues 14 to 36 (TLLGFFAITASMVMAVYEYPTFA) form a helical membrane-spanning segment. The Periplasmic segment spans residues 37 to 40 (TSGF). A helical membrane pass occupies residues 41-64 (SLVFFLLLGGILWFIPVGLCAAEM). Residues 65–85 (ATVDGWEEGGVFAWVSNTLGP) lie on the Cytoplasmic side of the membrane. Residues 86-112 (RWGFAAISFGYLQIAIGFIPMLYFVLG) form a helical membrane-spanning segment. At 113 to 126 (ALSYILKWPALNED) the chain is on the periplasmic side. Residues 127–147 (PITKTIAALIILWALALTQFG) form a helical membrane-spanning segment. The Cytoplasmic portion of the chain corresponds to 148–151 (GTKY). The helical transmembrane segment at 152-180 (TARIAKVGFFAGILLPAFILIALAAIYLH) threads the bilayer. Residues 181–201 (SGAPVAIEMDSKTFFPDFSKV) are Periplasmic-facing. The chain crosses the membrane as a helical span at residues 202-225 (GTLVVFVAFILSYMGVEASATHVN). Over 226–229 (EMSN) the chain is Cytoplasmic. Residues 230-259 (PGRDYPLAMLLLMVAAICLSSVGGLSIAMV) form a helical membrane-spanning segment. At 260–288 (IPGNEINLSAGVMQTFTVLMSHVAPEIEW) the chain is on the periplasmic side. A helical transmembrane segment spans residues 289–322 (TVRVISALLLLGVLAEIASWIVGPSRGMYVTAQK). The Cytoplasmic portion of the chain corresponds to 323-337 (NLLPAAFAKMNKNGV). A helical transmembrane segment spans residues 338 to 359 (PVTLVISQLVITSIALIILTNT). Residues 360 to 362 (GGG) lie on the Periplasmic side of the membrane. A helical membrane pass occupies residues 363-396 (NNMSFLIALALTVVIYLCAYFMLFIGYIVLVLKH). The Cytoplasmic segment spans residues 397 to 409 (PDLKRTFNIPGGK). A helical transmembrane segment spans residues 410-430 (GVKLVVAIVGLLTSIMAFIVS). The Periplasmic segment spans residues 431-443 (FLPPDNIQGDSTD). A helical membrane pass occupies residues 444–467 (MYVELLVVSFLVVLALPFILYAVH). At 468-511 (DRKGKANTGVTLEPINSQNAPKGHFFLHPRARSPHYIVMNDKKH) the chain is on the cytoplasmic side.

This sequence belongs to the amino acid-polyamine-organocation (APC) superfamily. Glutamate:GABA antiporter (GGA) (TC 2.A.3.7) family. Monomer.

Its subcellular location is the cell inner membrane. The catalysed reaction is 4-aminobutanoate(in) + L-glutamate(out) = 4-aminobutanoate(out) + L-glutamate(in). Shows pH-dependent activity. The Glu/GABA transport activity is robust at pH 4.5 and rapidly decreases with increasing pH, with no detectable activity at pH 6.5 or above. The Glu analog L-trans-pyrrolidine-2,4-dicarboxylic acid (L-PDC) blocks the uptake of glutamate by selective inhibition. Involved in glutaminase-dependent acid resistance. Exchanges extracellular glutamate (Glu) for intracellular gamma-aminobutyric acid (GABA) under acidic conditions. The protonation states of substrates are crucial for transport. Selectively transports Glu with no net charge and GABA with a positive charge. Also efficiently transports glutamine and, to a smaller extent, methionine and leucine. When the extracellular pH drops below 2.5, can import L-glutamine and export either glutamate or GABA. The ability to survive the extremely acidic conditions of the stomach is essential for successful colonization of the host by commensal and pathogenic bacteria. The sequence is that of Glutamate/gamma-aminobutyrate antiporter from Escherichia coli (strain K12).